Consider the following 337-residue polypeptide: Nucleoid-associated protein HSM_0096 (337 aa).

The protein belongs to the YejK family.

Its subcellular location is the cytoplasm. It is found in the nucleoid. The polypeptide is Nucleoid-associated protein HSM_0096 (Histophilus somni (strain 2336) (Haemophilus somnus)).